Reading from the N-terminus, the 173-residue chain is MDYFTLFGLPARYTVDREQLASCYQELQRQFHPDRFASQPEREKTLALQQAVTINDGYQTLKHPLKRAEYMLSLHGFDLANEQHTMNDNAFLMEQLMLREELECIADKANPEVALADFAARLNGMIKTRSQLMVQQLDEQQWEQAADTVRKLRFLDKLQQQVEQLEERLLDDF.

A J domain is found at 2-74 (DYFTLFGLPA…LKRAEYMLSL (73 aa)).

This sequence belongs to the HscB family. In terms of assembly, interacts with HscA and stimulates its ATPase activity. Interacts with IscU.

Its function is as follows. Co-chaperone involved in the maturation of iron-sulfur cluster-containing proteins. Seems to help targeting proteins to be folded toward HscA. This chain is Co-chaperone protein HscB, found in Photorhabdus laumondii subsp. laumondii (strain DSM 15139 / CIP 105565 / TT01) (Photorhabdus luminescens subsp. laumondii).